We begin with the raw amino-acid sequence, 448 residues long: Na(+)-translocating NADH-quinone reductase subunit A (448 aa).

Belongs to the NqrA family. As to quaternary structure, composed of six subunits; NqrA, NqrB, NqrC, NqrD, NqrE and NqrF.

The enzyme catalyses a ubiquinone + n Na(+)(in) + NADH + H(+) = a ubiquinol + n Na(+)(out) + NAD(+). NQR complex catalyzes the reduction of ubiquinone-1 to ubiquinol by two successive reactions, coupled with the transport of Na(+) ions from the cytoplasm to the periplasm. NqrA to NqrE are probably involved in the second step, the conversion of ubisemiquinone to ubiquinol. This Alcanivorax borkumensis (strain ATCC 700651 / DSM 11573 / NCIMB 13689 / SK2) protein is Na(+)-translocating NADH-quinone reductase subunit A.